The chain runs to 492 residues: Trypanothione reductase (492 aa).

D36 to T52 contacts FAD. Residues C53 and C58 are joined by a disulfide bond. H461 functions as the Proton acceptor in the catalytic mechanism.

It belongs to the class-I pyridine nucleotide-disulfide oxidoreductase family. In terms of assembly, homodimer. The cofactor is FAD.

The protein resides in the cytoplasm. It catalyses the reaction trypanothione + NADP(+) = trypanothione disulfide + NADPH + H(+). Trypanothione is the parasite analog of glutathione; this enzyme is the equivalent of glutathione reductase. This Trypanosoma cruzi protein is Trypanothione reductase (TPR).